Reading from the N-terminus, the 337-residue chain is Hsp90 co-chaperone Cdc37-like 1 (337 aa).

A compositionally biased stretch (pro residues) spans methionine 1 to tryptophan 11. The disordered stretch occupies residues methionine 1–serine 42. Residues glutamate 2–methionine 171 form a self-association region. Residues serine 32 and serine 88 each carry the phosphoserine modification. Residues asparagine 85–lysine 122 are a coiled coil. Positions lysine 147 to glutamine 277 are self-association and interaction with Hsp90. The interval lysine 267 to valine 337 is interaction with Hsp70. The segment at serine 278–valine 337 is required for interaction with STIP1.

This sequence belongs to the CDC37 family. In terms of assembly, self-associates. Forms complexes with Hsp70 and Hsp90. Interacts with CDC37, FKBP4, PPID and STIP1.

It localises to the cytoplasm. In terms of biological role, co-chaperone that binds to numerous proteins and promotes their interaction with Hsp70 and Hsp90. The chain is Hsp90 co-chaperone Cdc37-like 1 (CDC37L1) from Pongo abelii (Sumatran orangutan).